The following is a 179-amino-acid chain: Adenine phosphoribosyltransferase (179 aa).

The protein belongs to the purine/pyrimidine phosphoribosyltransferase family. In terms of assembly, homodimer.

Its subcellular location is the cytoplasm. It catalyses the reaction AMP + diphosphate = 5-phospho-alpha-D-ribose 1-diphosphate + adenine. It participates in purine metabolism; AMP biosynthesis via salvage pathway; AMP from adenine: step 1/1. Catalyzes a salvage reaction resulting in the formation of AMP, that is energically less costly than de novo synthesis. The chain is Adenine phosphoribosyltransferase from Methylacidiphilum infernorum (isolate V4) (Methylokorus infernorum (strain V4)).